Here is a 1652-residue protein sequence, read N- to C-terminus: Maestro heat-like repeat-containing protein family member 1 (1652 aa).

HEAT repeat units lie at residues 3–41, 260–300, 344–382, 385–423, 1369–1407, 1410–1448, and 1616–1652; these read ETYA…SKPA, EEQL…VGSR, CCSP…AAAA, EVKK…HGYL, LMLL…GSPD, QTHS…LMDL, and QVDL…VKFA.

This sequence belongs to the MROH1 family. Homooligomer; homooligomerizes at lysosome scission sites.

It localises to the lysosome membrane. Its function is as follows. Lysosome fission factor. Recruited to lysosomes by RAB7 (RAB7A or RAB7B) at scission sites and homooligomerizes to mediate the constriction and scission of lysosomal tubules. May sever membranes by inserting amphipathic helices into one bilayer leaflet. Lysosome fission is required to maintain their steady-state number, shape, size, composition and function, and to accomplish regeneration. The sequence is that of Maestro heat-like repeat-containing protein family member 1 (MROH1) from Bos taurus (Bovine).